Reading from the N-terminus, the 203-residue chain is Superoxide dismutase [Mn/Fe] (203 aa).

The Fe(3+) site is built by H27, H81, D163, and H167. H27, H81, D163, and H167 together coordinate Mn(2+).

Belongs to the iron/manganese superoxide dismutase family. Mn(2+) is required as a cofactor. The cofactor is Fe(3+).

The enzyme catalyses 2 superoxide + 2 H(+) = H2O2 + O2. Functionally, destroys superoxide anion radicals which are normally produced within the cells and which are toxic to biological systems. Catalyzes the dismutation of superoxide anion radicals into O2 and H2O2 by successive reduction and oxidation of the transition metal ion at the active site. This chain is Superoxide dismutase [Mn/Fe] (sodA), found in Streptococcus mutans serotype c (strain ATCC 700610 / UA159).